A 344-amino-acid polypeptide reads, in one-letter code: Probable dual-specificity RNA methyltransferase RlmN (344 aa).

Residue E92 is the Proton acceptor of the active site. In terms of domain architecture, Radical SAM core spans 98–325 (DEDRATLCVS…TTIRASRGED (228 aa)). A disulfide bond links C105 and C330. Residues C112, C116, and C119 each contribute to the [4Fe-4S] cluster site. Residues 157 to 158 (GE), S189, 211 to 213 (SLH), and H287 contribute to the S-adenosyl-L-methionine site. C330 serves as the catalytic S-methylcysteine intermediate.

It belongs to the radical SAM superfamily. RlmN family. [4Fe-4S] cluster serves as cofactor.

The protein resides in the cytoplasm. It catalyses the reaction adenosine(2503) in 23S rRNA + 2 reduced [2Fe-2S]-[ferredoxin] + 2 S-adenosyl-L-methionine = 2-methyladenosine(2503) in 23S rRNA + 5'-deoxyadenosine + L-methionine + 2 oxidized [2Fe-2S]-[ferredoxin] + S-adenosyl-L-homocysteine. The enzyme catalyses adenosine(37) in tRNA + 2 reduced [2Fe-2S]-[ferredoxin] + 2 S-adenosyl-L-methionine = 2-methyladenosine(37) in tRNA + 5'-deoxyadenosine + L-methionine + 2 oxidized [2Fe-2S]-[ferredoxin] + S-adenosyl-L-homocysteine. Specifically methylates position 2 of adenine 2503 in 23S rRNA and position 2 of adenine 37 in tRNAs. The protein is Probable dual-specificity RNA methyltransferase RlmN of Bacteroides fragilis (strain YCH46).